A 776-amino-acid chain; its full sequence is Mitochondrial intermediate peptidase (776 aa).

The transit peptide at 1-28 (MRRFSTLSRRLQRVVPASSASTANTSPS) directs the protein to the mitochondrion. His-561 provides a ligand contact to Zn(2+). Glu-562 is a catalytic residue. His-565 and His-568 together coordinate Zn(2+).

It belongs to the peptidase M3 family. Zn(2+) is required as a cofactor.

It is found in the mitochondrion matrix. The catalysed reaction is Release of an N-terminal octapeptide as second stage of processing of some proteins imported into the mitochondrion.. Functionally, cleaves proteins, imported into the mitochondrion, to their mature size. While most mitochondrial precursor proteins are processed to the mature form in one step by mitochondrial processing peptidase (MPP), the sequential cleavage by MIP of an octapeptide after initial processing by MPP is a required step for a subgroup of nuclear-encoded precursor proteins destined for the matrix or the inner membrane. This chain is Mitochondrial intermediate peptidase (OCT1), found in Yarrowia lipolytica (strain CLIB 122 / E 150) (Yeast).